The primary structure comprises 167 residues: NADH-quinone oxidoreductase subunit E (167 aa).

Cysteine 91, cysteine 96, cysteine 132, and cysteine 136 together coordinate [2Fe-2S] cluster.

It belongs to the complex I 24 kDa subunit family. [2Fe-2S] cluster serves as cofactor.

The catalysed reaction is a quinone + NADH + 5 H(+)(in) = a quinol + NAD(+) + 4 H(+)(out). NDH-1 shuttles electrons from NADH, via FMN and iron-sulfur (Fe-S) centers, to quinones in the respiratory chain. Couples the redox reaction to proton translocation (for every two electrons transferred, four hydrogen ions are translocated across the cytoplasmic membrane), and thus conserves the redox energy in a proton gradient. In Rickettsia bellii (strain RML369-C), this protein is NADH-quinone oxidoreductase subunit E (nuoE).